A 510-amino-acid polypeptide reads, in one-letter code: Coatomer subunit delta (510 aa).

The region spanning 270–510 (MESVHMKIEE…TFLVDKYEIL (241 aa)) is the MHD domain.

The protein belongs to the adaptor complexes medium subunit family. Delta-COP subfamily. As to quaternary structure, oligomeric complex that consists of at least the alpha, beta, beta', gamma, delta, epsilon and zeta subunits.

The protein resides in the cytoplasm. It localises to the golgi apparatus membrane. Its subcellular location is the cytoplasmic vesicle. The protein localises to the COPI-coated vesicle membrane. The coatomer is a cytosolic protein complex that binds to dilysine motifs and reversibly associates with Golgi non-clathrin-coated vesicles, which further mediate biosynthetic protein transport from the ER, via the Golgi up to the trans Golgi network. Coatomer complex is required for budding from Golgi membranes, and is essential for the retrograde Golgi-to-ER transport of dilysine-tagged proteins. In mammals, the coatomer can only be recruited by membranes associated to ADP-ribosylation factors (ARFs), which are small GTP-binding proteins; the complex also influences the Golgi structural integrity, as well as the processing, activity, and endocytic recycling of LDL receptors. The protein is Coatomer subunit delta (ARCN1) of Gallus gallus (Chicken).